A 402-amino-acid chain; its full sequence is 4-hydroxy-3-methylbut-2-enyl diphosphate reductase (402 aa).

Cys66 provides a ligand contact to [4Fe-4S] cluster. His96 provides a ligand contact to (2E)-4-hydroxy-3-methylbut-2-enyl diphosphate. Residue His96 participates in dimethylallyl diphosphate binding. His96 contacts isopentenyl diphosphate. Cys157 contributes to the [4Fe-4S] cluster binding site. His185 serves as a coordination point for (2E)-4-hydroxy-3-methylbut-2-enyl diphosphate. Dimethylallyl diphosphate is bound at residue His185. His185 provides a ligand contact to isopentenyl diphosphate. The Proton donor role is filled by Glu187. Residue Thr250 participates in (2E)-4-hydroxy-3-methylbut-2-enyl diphosphate binding. Cys288 contacts [4Fe-4S] cluster. Residues Ser317, Ser318, Asn319, and Ser379 each coordinate (2E)-4-hydroxy-3-methylbut-2-enyl diphosphate. Positions 317, 318, 319, and 379 each coordinate dimethylallyl diphosphate. Residues Ser317, Ser318, Asn319, and Ser379 each coordinate isopentenyl diphosphate.

It belongs to the IspH family. [4Fe-4S] cluster serves as cofactor.

The enzyme catalyses isopentenyl diphosphate + 2 oxidized [2Fe-2S]-[ferredoxin] + H2O = (2E)-4-hydroxy-3-methylbut-2-enyl diphosphate + 2 reduced [2Fe-2S]-[ferredoxin] + 2 H(+). The catalysed reaction is dimethylallyl diphosphate + 2 oxidized [2Fe-2S]-[ferredoxin] + H2O = (2E)-4-hydroxy-3-methylbut-2-enyl diphosphate + 2 reduced [2Fe-2S]-[ferredoxin] + 2 H(+). Its pathway is isoprenoid biosynthesis; dimethylallyl diphosphate biosynthesis; dimethylallyl diphosphate from (2E)-4-hydroxy-3-methylbutenyl diphosphate: step 1/1. It functions in the pathway isoprenoid biosynthesis; isopentenyl diphosphate biosynthesis via DXP pathway; isopentenyl diphosphate from 1-deoxy-D-xylulose 5-phosphate: step 6/6. Its function is as follows. Catalyzes the conversion of 1-hydroxy-2-methyl-2-(E)-butenyl 4-diphosphate (HMBPP) into a mixture of isopentenyl diphosphate (IPP) and dimethylallyl diphosphate (DMAPP). Acts in the terminal step of the DOXP/MEP pathway for isoprenoid precursor biosynthesis. This Thermosynechococcus vestitus (strain NIES-2133 / IAM M-273 / BP-1) protein is 4-hydroxy-3-methylbut-2-enyl diphosphate reductase.